Reading from the N-terminus, the 837-residue chain is MVGLGACTLTGVTLIFLLLPRSLESCGHIEISPPVVRLGDPVLASCTISPNCSKLDQQAKILWRLQDEPIQPGDRQHHLPDGTQESLITLPHLNYTQAFLFCLVPWEDSVQLLDQAELHAGYPPASPSNLSCLMHLTTNSLVCQWEPGPETHLPTSFILKSFRSRADCQYQGDTIPDCVAKKRQNNCSIPRKNLLLYQYMAIWVQAENMLGSSESPKLCLDPMDVVKLEPPMLQALDIGPDVVSHQPGCLWLSWKPWKPSEYMEQECELRYQPQLKGANWTLVFHLPSSKDQFELCGLHQAPVYTLQMRCIRSSLPGFWSPWSPGLQLRPTMKAPTIRLDTWCQKKQLDPGTVSVQLFWKPTPLQEDSGQIQGYLLSWSSPDHQGQDIHLCNTTQLSCIFLLPSEAQNVTLVAYNKAGTSSPTTVVFLENEGPAVTGLHAMAQDLNTIWVDWEAPSLLPQGYLIEWEMSSPSYNNSYKSWMIEPNGNITGILLKDNINPFQLYRITVAPLYPGIVGPPVNVYTFAGERAPPHAPALHLKHVGTTWAQLEWVPEAPRLGMIPLTHYTIFWADAGDHSFSVTLNISLHDFVLKHLEPASLYHVYLMATSRAGSTNSTGLTLRTLDPSDLNIFLGILCLVLLSTTCVVTWLCCKRRGKTSFWSDVPDPAHSSLSSWLPTIMTEETFQLPSFWDSSVPSITKITELEEDKKPTHWDSESSGNGSLPALVQAYVLQGDPREISNQSQPPSRTGDQVLYGQVLESPTSPGVMQYIRSDSTQPLLGGPTPSPKSYENIWFHSRPQETFVPQPPNQEDDCVFGPPFDFPLFQGLQVHGVEEQGGF.

The N-terminal stretch at 1–25 (MVGLGACTLTGVTLIFLLLPRSLES) is a signal peptide. Cystine bridges form between C26–C52 and C46–C102. The 93-residue stretch at 26 to 118 (CGHIEISPPV…SVQLLDQAEL (93 aa)) folds into the Ig-like C2-type domain. The Extracellular portion of the chain corresponds to 26 to 626 (CGHIEISPPV…LTLRTLDPSD (601 aa)). N51, N94, and N129 each carry an N-linked (GlcNAc...) asparagine glycan. 5 Fibronectin type-III domains span residues 126 to 231 (SPSN…LEPP), 236 to 331 (LDIG…LRPT), 334 to 433 (APTI…NEGP), 434 to 529 (AVTG…GERA), and 530 to 624 (PPHA…TLDP). 5 cysteine pairs are disulfide-bonded: C132–C143, C168–C219, C178–C187, C249–C296, and C267–C310. N186 and N279 each carry an N-linked (GlcNAc...) asparagine glycan. The WSXWS motif motif lies at 319–323 (WSPWS). Residues N392, N408, N474, N487, N582, and N613 are each glycosylated (N-linked (GlcNAc...) asparagine). Residues 627–650 (LNIFLGILCLVLLSTTCVVTWLCC) form a helical membrane-spanning segment. At 651–837 (KRRGKTSFWS…VHGVEEQGGF (187 aa)) the chain is on the cytoplasmic side. The Box 1 motif signature appears at 658–666 (FWSDVPDPA).

Belongs to the type I cytokine receptor family. Type 2 subfamily. Homodimer. The dimeric receptor binds two CSF3 molecules. Interacts with CEACAM1; down-regulates the CSF3R-STAT3 pathway through recruitment of PTPN6 that dephosphorylates CSF3R. N-glycosylated. In terms of tissue distribution, found in bone marrow.

Its subcellular location is the membrane. Functionally, receptor for granulocyte colony-stimulating factor (CSF3). In addition it may function in some adhesion or recognition events at the cell surface. The chain is Granulocyte colony-stimulating factor receptor (Csf3r) from Mus musculus (Mouse).